Here is a 123-residue protein sequence, read N- to C-terminus: Fluoride-specific ion channel FluC (123 aa).

Helical transmembrane passes span 7-27, 39-59, 68-88, and 100-120; these read VAIALGGALGALARFYISGIL, LVNSIASFILGYIYGLLFWGI, FFGTGFCGALSTFSTFSYETF, and ALNISANVIITVSLVFIGFIL. Glycine 75 and serine 78 together coordinate Na(+).

Belongs to the fluoride channel Fluc/FEX (TC 1.A.43) family.

The protein localises to the cell membrane. It carries out the reaction fluoride(in) = fluoride(out). With respect to regulation, na(+) is not transported, but it plays an essential structural role and its presence is essential for fluoride channel function. Fluoride-specific ion channel. Important for reducing fluoride concentration in the cell, thus reducing its toxicity. This Thermococcus onnurineus (strain NA1) protein is Fluoride-specific ion channel FluC.